Here is a 393-residue protein sequence, read N- to C-terminus: Lipid-A-disaccharide synthase (393 aa).

This sequence belongs to the LpxB family.

It catalyses the reaction a lipid X + a UDP-2-N,3-O-bis[(3R)-3-hydroxyacyl]-alpha-D-glucosamine = a lipid A disaccharide + UDP + H(+). Its pathway is bacterial outer membrane biogenesis; LPS lipid A biosynthesis. Condensation of UDP-2,3-diacylglucosamine and 2,3-diacylglucosamine-1-phosphate to form lipid A disaccharide, a precursor of lipid A, a phosphorylated glycolipid that anchors the lipopolysaccharide to the outer membrane of the cell. This is Lipid-A-disaccharide synthase from Rhodopseudomonas palustris (strain ATCC BAA-98 / CGA009).